The chain runs to 622 residues: Chaperone protein HscA homolog (622 aa).

Belongs to the heat shock protein 70 family.

Its function is as follows. Chaperone involved in the maturation of iron-sulfur cluster-containing proteins. Has a low intrinsic ATPase activity which is markedly stimulated by HscB. This Burkholderia cenocepacia (strain ATCC BAA-245 / DSM 16553 / LMG 16656 / NCTC 13227 / J2315 / CF5610) (Burkholderia cepacia (strain J2315)) protein is Chaperone protein HscA homolog.